A 132-amino-acid chain; its full sequence is Vacuolar protein sorting-associated protein 55 homolog (132 aa).

Transmembrane regions (helical) follow at residues 7 to 27 (VAAL…GCAL), 32 to 52 (TWTP…LLIA), 68 to 88 (LALF…IVLA), and 98 to 118 (CFLV…YFYL).

The protein belongs to the OB-RGRP/VPS55 family.

The protein resides in the endosome membrane. Its function is as follows. Involved in endosomal protein transport. In Caenorhabditis elegans, this protein is Vacuolar protein sorting-associated protein 55 homolog.